The following is a 2561-amino-acid chain: Squalestatin hexaketide synthase (2561 aa).

Positions 1 to 77 (MDVSKEEGQR…NGTTNITPEF (77 aa)) are disordered. Residues 20–74 (NETTNGHTNGYTNGHTNGHTNGTTNATTNGTTNGTMNGTTNGTTNRTTNGTTNIT) show a composition bias toward low complexity. One can recognise a Ketosynthase family 3 (KS3) domain in the interval 83-503 (QVPVAICGIG…GSNTHIIIDS (421 aa)). Active-site for beta-ketoacyl synthase activity residues include cysteine 253, histidine 390, and histidine 427. The tract at residues 603 to 925 (FIFTGQGAQW…LEAIGKLFCF (323 aa)) is malonyl-CoA:ACP transacylase (MAT) domain. The tract at residues 972–1101 (HELLGERSLE…GLVTASVVIS (130 aa)) is N-terminal hotdog fold. Positions 972–1253 (HELLGERSLE…RGFKCKRTDE (282 aa)) are dehydratase (DH) domain. The region spanning 972–1257 (HELLGERSLE…CKRTDESFIQ (286 aa)) is the PKS/mFAS DH domain. The active-site Proton acceptor; for dehydratase activity is the histidine 1004. The tract at residues 1112-1257 (TFPRKVDTSR…CKRTDESFIQ (146 aa)) is C-terminal hotdog fold. The Proton donor; for dehydratase activity role is filled by aspartate 1174. The interval 1421 to 1599 (SFFQAAGLNK…GFEGAGTVVL (179 aa)) is methyltransferase (CMet) domain. Residues 1826–2146 (GMLNTLHWVG…RGVHMGRIVV (321 aa)) form an enoyl reductase (ER) (ER) domain region. The interval 2170-2343 (STYLLTGGMG…PASVIDIAAI (174 aa)) is ketoreductase (KR) domain. A Carrier domain is found at 2472–2550 (VLFAQEIAKR…SLGRLATKRL (79 aa)). Residue serine 2509 is modified to O-(pantetheine 4'-phosphoryl)serine.

Its pathway is secondary metabolite biosynthesis. Highly reducing polyketide synthase (HR-PKS); part of the gene cluster that mediates the biosynthesis of squalestatin S1 (SQS1, also known as zaragozic acid A), a heavily oxidized fungal polyketide that offers potent cholesterol lowering activity by targeting squalene synthase (SS). SQS1 is composed of a 2,8-dioxobicyclic[3.2.1]octane-3,4,5-tricarboxyclic acid core that is connected to two lipophilic polyketide arms. These initial steps feature the priming of an unusual benzoic acid starter unit onto the highly reducing polyketide synthase pks2, followed by oxaloacetate extension and product release to generate a tricarboxylic acid containing product. The phenylalanine ammonia lyase (PAL) M7 and the acyl-CoA ligase M9 are involved in transforming phenylalanine into benzoyl-CoA. The citrate synthase-like protein R3 is involved in connecting the C-alpha-carbons of the hexaketide chain and oxaloacetate to afford the tricarboxylic acid unit. The potential hydrolytic enzymes, M8 and M10, are in close proximity to pks2 and may participate in product release. On the other side, the tetraketide arm is synthesized by a the squalestatin tetraketide synthase pks1 and enzymatically esterified to the core in the last biosynthetic step, by the acetyltransferase M4. The biosynthesis of the tetraketide must involve 3 rounds of chain extension. After the first and second rounds methyl-transfer occurs, and in all rounds of extension the ketoreductase and dehydratase are active. The enoyl reductase and C-MeT of pks1 are not active in the final round of extension. The acetyltransferase M4 appears to have a broad substrate selectivity for its acyl CoA substrate, allowing the in vitro synthesis of novel squalestatins. The biosynthesis of SQS1 requires several oxidative steps likely performed by oxidoreductases M1, R1 and R2. Finally, in support of the identification of the cluster as being responsible for SQS1 production, the cluster contains a gene encoding a putative squalene synthase (SS) R6, suggesting a likely mechanism for self-resistance. The sequence is that of Squalestatin hexaketide synthase from Phoma sp. (strain ATCC 20986 / MF5453).